The chain runs to 325 residues: Putative HTH-type transcriptional regulatory protein MK1005 (325 aa).

Residues 128–190 (VDELDVSRVR…FERRVAELLE (63 aa)) form the HTH cro/C1-type domain. The segment at residues 139-158 (RQLRREGGRITLARAEEADV) is a DNA-binding region (H-T-H motif).

In Methanopyrus kandleri (strain AV19 / DSM 6324 / JCM 9639 / NBRC 100938), this protein is Putative HTH-type transcriptional regulatory protein MK1005.